The following is a 278-amino-acid chain: Pantothenate synthetase (278 aa).

27–34 is a binding site for ATP; that stretch reads MGYLHEGH. The active-site Proton donor is His34. Residue Gln58 participates in (R)-pantoate binding. Gln58 lines the beta-alanine pocket. Position 144–147 (144–147) interacts with ATP; the sequence is GQKD. Gln150 serves as a coordination point for (R)-pantoate. Residues Val173 and 181 to 184 each bind ATP; that span reads MSSR.

The protein belongs to the pantothenate synthetase family. Homodimer.

It is found in the cytoplasm. The catalysed reaction is (R)-pantoate + beta-alanine + ATP = (R)-pantothenate + AMP + diphosphate + H(+). The protein operates within cofactor biosynthesis; (R)-pantothenate biosynthesis; (R)-pantothenate from (R)-pantoate and beta-alanine: step 1/1. In terms of biological role, catalyzes the condensation of pantoate with beta-alanine in an ATP-dependent reaction via a pantoyl-adenylate intermediate. The sequence is that of Pantothenate synthetase from Roseiflexus castenholzii (strain DSM 13941 / HLO8).